The primary structure comprises 585 residues: MPKKIHQPGGSLYCGVTLLGVLCLVVFRLIPGIPFGTYVMAERDHYHTIDDPNVPCNFYDTVNLTGHRLFPNGSYDYYGTIVPAELVGTYDYIHSSLTERIEVREHVRGCVCKFKSCLNICCPWRQVFNSEVDGCIIDHSDNRTWPDPPMLNITFRNESTILVNMFTQFAIQSFRPCPKMFSLQPETNNWDDYLLFENGSMLRVDDKLLIRKNEFCMVPTYVNESDMFYTIHPANCDMQDDHSTVKIINSYAMMFSIPFMMLTIAVYLLIPELRNQHGKSLVCYLIGLSVGYSSLCYVQLYQVDATGVTCKVFGYTAYFFFMGAYMWLSVISFDLWHNFRGTRGINRFQEKKRFLFYSLYSWGIALVFLAFTYCAQQLTNLPANLKPGIGDGVYCWLDMSNWAAMIYFYGPILAIVVANTIMFIMTAIKIHGVQREMARIIASENSTKNLRTEKDKRFYRAWSNYRFGLFLRLFLIMGITWLTELISYFVGSDKGWSKLFYISDLANAMQGFLIFMLFVMKKKVKHLITNRCSSVRDGSNQRQSQYSTKTTSSSVANLSLHEKPSVEKPLVISSSVDPQKTTIFR.

The first 32 residues, 1-32 (MPKKIHQPGGSLYCGVTLLGVLCLVVFRLIPG), serve as a signal peptide directing secretion. The Extracellular segment spans residues 33–250 (IPFGTYVMAE…DHSTVKIINS (218 aa)). Intrachain disulfides connect C56–C110, C112–C117, C121–C216, C122–C135, and C177–C236. N-linked (GlcNAc...) asparagine glycans are attached at residues N63 and N72. N-linked (GlcNAc...) asparagine glycosylation is found at N142, N152, N157, N198, and N223. Residues 251–271 (YAMMFSIPFMMLTIAVYLLIP) traverse the membrane as a helical segment. The Cytoplasmic portion of the chain corresponds to 272–280 (ELRNQHGKS). Residues 281–301 (LVCYLIGLSVGYSSLCYVQLY) form a helical membrane-spanning segment. The Extracellular portion of the chain corresponds to 302–312 (QVDATGVTCKV). The helical transmembrane segment at 313-333 (FGYTAYFFFMGAYMWLSVISF) threads the bilayer. The Cytoplasmic portion of the chain corresponds to 334–353 (DLWHNFRGTRGINRFQEKKR). Residues 354–374 (FLFYSLYSWGIALVFLAFTYC) form a helical membrane-spanning segment. Residues 375–404 (AQQLTNLPANLKPGIGDGVYCWLDMSNWAA) lie on the Extracellular side of the membrane. A helical membrane pass occupies residues 405–425 (MIYFYGPILAIVVANTIMFIM). Over 426–466 (TAIKIHGVQREMARIIASENSTKNLRTEKDKRFYRAWSNYR) the chain is Cytoplasmic. The chain crosses the membrane as a helical span at residues 467-487 (FGLFLRLFLIMGITWLTELIS). At 488–498 (YFVGSDKGWSK) the chain is on the extracellular side. Residues 499–519 (LFYISDLANAMQGFLIFMLFV) traverse the membrane as a helical segment. Residues 520-585 (MKKKVKHLIT…VDPQKTTIFR (66 aa)) are Cytoplasmic-facing.

Belongs to the G-protein coupled receptor 2 family. Mth subfamily.

The protein localises to the cell membrane. This Drosophila melanogaster (Fruit fly) protein is Probable G-protein coupled receptor Mth-like 10 (mthl10).